Here is a 302-residue protein sequence, read N- to C-terminus: Glutaminase (302 aa).

The substrate site is built by S61, N111, E155, N162, Y186, Y238, and V256.

This sequence belongs to the glutaminase family. Homotetramer.

It catalyses the reaction L-glutamine + H2O = L-glutamate + NH4(+). This chain is Glutaminase, found in Pseudomonas putida (strain ATCC 700007 / DSM 6899 / JCM 31910 / BCRC 17059 / LMG 24140 / F1).